Reading from the N-terminus, the 328-residue chain is Cell division protein ZipA (328 aa).

The Periplasmic segment spans residues 1-4 (MDLN). Residues 5–25 (TILIIVGIVALVALIVHGLWS) traverse the membrane as a helical segment. The Cytoplasmic portion of the chain corresponds to 26–328 (NRREKSKYFD…NAEQAYLARV (303 aa)). The disordered stretch occupies residues 44–82 (SLTSRSHTQEEMVQPNNISPNTYVENGHTPISQPTTEKL). Over residues 57-81 (QPNNISPNTYVENGHTPISQPTTEK) the composition is skewed to polar residues.

It belongs to the ZipA family. Interacts with FtsZ via their C-terminal domains.

It localises to the cell inner membrane. Its function is as follows. Essential cell division protein that stabilizes the FtsZ protofilaments by cross-linking them and that serves as a cytoplasmic membrane anchor for the Z ring. Also required for the recruitment to the septal ring of downstream cell division proteins. The chain is Cell division protein ZipA from Haemophilus influenzae (strain PittGG).